Here is a 203-residue protein sequence, read N- to C-terminus: Probable GTP-binding protein EngB (203 aa).

The EngB-type G domain occupies 1–190; it reads MPEIVLVGRS…LEALQERVRK (190 aa). GTP contacts are provided by residues 8–15, 35–39, 53–56, 132–135, and 169–171; these read GRSNVGKS, GVTRK, DMPG, NKID, and ISA. 2 residues coordinate Mg(2+): S15 and T37.

It belongs to the TRAFAC class TrmE-Era-EngA-EngB-Septin-like GTPase superfamily. EngB GTPase family. Requires Mg(2+) as cofactor.

Necessary for normal cell division and for the maintenance of normal septation. The protein is Probable GTP-binding protein EngB of Methanopyrus kandleri (strain AV19 / DSM 6324 / JCM 9639 / NBRC 100938).